Reading from the N-terminus, the 541-residue chain is Chaperonin GroEL 1 (541 aa).

Residues 29-32, 86-90, glycine 415, 479-481, and aspartate 495 each bind ATP; these read TIGP, DGTTT, and NAA.

It belongs to the chaperonin (HSP60) family. In terms of assembly, forms a cylinder of 14 subunits composed of two heptameric rings stacked back-to-back. Interacts with the co-chaperonin GroES.

Its subcellular location is the cytoplasm. It carries out the reaction ATP + H2O + a folded polypeptide = ADP + phosphate + an unfolded polypeptide.. Its function is as follows. Together with its co-chaperonin GroES, plays an essential role in assisting protein folding. The GroEL-GroES system forms a nano-cage that allows encapsulation of the non-native substrate proteins and provides a physical environment optimized to promote and accelerate protein folding. This chain is Chaperonin GroEL 1, found in Streptomyces coelicolor (strain ATCC BAA-471 / A3(2) / M145).